The sequence spans 440 residues: Chromosomal replication initiator protein DnaA (440 aa).

The tract at residues 1 to 74 (MNPSQILENL…VQSGNKAIIN (74 aa)) is domain I, interacts with DnaA modulators. The domain II stretch occupies residues 74-99 (NIQAQSTKQSNKSTKIDIAHIQAQST). Positions 100–316 (ILNPSFTFES…GIIISLNAYA (217 aa)) are domain III, AAA+ region. Residues glycine 146, glycine 148, lysine 149, and threonine 150 each contribute to the ATP site. The domain IV, binds dsDNA stretch occupies residues 317-440 (TILGQEITLE…KNKILIKSQS (124 aa)).

It belongs to the DnaA family. As to quaternary structure, oligomerizes as a right-handed, spiral filament on DNA at oriC.

It localises to the cytoplasm. Functionally, plays an essential role in the initiation and regulation of chromosomal replication. ATP-DnaA binds to the origin of replication (oriC) to initiate formation of the DNA replication initiation complex once per cell cycle. Binds the DnaA box (a 9 base pair repeat at the origin) and separates the double-stranded (ds)DNA. Forms a right-handed helical filament on oriC DNA; dsDNA binds to the exterior of the filament while single-stranded (ss)DNA is stabiized in the filament's interior. The ATP-DnaA-oriC complex binds and stabilizes one strand of the AT-rich DNA unwinding element (DUE), permitting loading of DNA polymerase. After initiation quickly degrades to an ADP-DnaA complex that is not apt for DNA replication. Binds acidic phospholipids. The sequence is that of Chromosomal replication initiator protein DnaA from Campylobacter jejuni subsp. doylei (strain ATCC BAA-1458 / RM4099 / 269.97).